The following is a 255-amino-acid chain: Acetylglutamate kinase (255 aa).

Substrate is bound by residues 40–41 (GG), Arg62, and Asn153.

The protein belongs to the acetylglutamate kinase family. ArgB subfamily.

Its subcellular location is the cytoplasm. The enzyme catalyses N-acetyl-L-glutamate + ATP = N-acetyl-L-glutamyl 5-phosphate + ADP. The protein operates within amino-acid biosynthesis; L-arginine biosynthesis; N(2)-acetyl-L-ornithine from L-glutamate: step 2/4. Functionally, catalyzes the ATP-dependent phosphorylation of N-acetyl-L-glutamate. This chain is Acetylglutamate kinase, found in Bacillus cereus (strain AH820).